Reading from the N-terminus, the 367-residue chain is 5-amino-6-(D-ribitylamino)uracil--L-tyrosine 4-hydroxyphenyl transferase (367 aa).

The region spanning 54–288 is the Radical SAM core domain; the sequence is ITYIENWNIN…VYAISRLMFR (235 aa). [4Fe-4S] cluster is bound by residues C68, C72, and C75.

This sequence belongs to the radical SAM superfamily. CofH family. As to quaternary structure, consists of two subunits, CofG and CofH. Requires [4Fe-4S] cluster as cofactor.

It carries out the reaction 5-amino-6-(D-ribitylamino)uracil + L-tyrosine + S-adenosyl-L-methionine = 5-amino-5-(4-hydroxybenzyl)-6-(D-ribitylimino)-5,6-dihydrouracil + 2-iminoacetate + 5'-deoxyadenosine + L-methionine + H(+). It participates in cofactor biosynthesis; coenzyme F0 biosynthesis. Catalyzes the radical-mediated synthesis of 5-amino-5-(4-hydroxybenzyl)-6-(D-ribitylimino)-5,6-dihydrouracil from 5-amino-6-(D-ribitylamino)uracil and L-tyrosine. The protein is 5-amino-6-(D-ribitylamino)uracil--L-tyrosine 4-hydroxyphenyl transferase of Methanothermobacter thermautotrophicus (strain ATCC 29096 / DSM 1053 / JCM 10044 / NBRC 100330 / Delta H) (Methanobacterium thermoautotrophicum).